Reading from the N-terminus, the 71-residue chain is Large ribosomal subunit protein eL38 (71 aa).

Belongs to the eukaryotic ribosomal protein eL38 family.

This Ixodes scapularis (Black-legged tick) protein is Large ribosomal subunit protein eL38 (RpL38).